The following is a 1253-amino-acid chain: Methionine synthase (1253 aa).

A Hcy-binding domain is found at 6 to 326 (QDEIEAILRK…DHIREIAEAV (321 aa)). The Zn(2+) site is built by Cys248, Cys311, and Cys312. The region spanning 359 to 620 (FVNIGERCNV…IHKDLLQLCE (262 aa)) is the Pterin-binding domain. (6S)-5,6,7,8-tetrahydrofolate is bound by residues 370 to 372 (GSK), Asp437, Asn458, Asp525, Asn567, Arg573, and Arg579. The region spanning 650 to 747 (QTDEWRNGSI…FMEKEREEAR (98 aa)) is the B12-binding N-terminal domain. Residues Glu697, 770 to 774 (GDVHD), His773, Ser818, Thr822, and Ala874 contribute to the methylcob(III)alamin site. A B12-binding domain is found at 760–895 (QGTIVLATVK…DENLKDDYFE (136 aa)). One can recognise an AdoMet activation domain in the interval 911-1253 (SLKERKYLPL…LGPILGYDTD (343 aa)). S-adenosyl-L-methionine contacts are provided by residues Asp962, Arg1160, and 1215–1216 (YF). Thr1252 is modified (phosphothreonine).

It belongs to the vitamin-B12 dependent methionine synthase family. As to quaternary structure, monomer. Dimer. Forms a multiprotein complex with MMACHC, MMADHC and MTRR. The cofactor is methylcob(III)alamin. Zn(2+) is required as a cofactor.

The protein resides in the cytoplasm. The catalysed reaction is (6S)-5-methyl-5,6,7,8-tetrahydrofolate + L-homocysteine = (6S)-5,6,7,8-tetrahydrofolate + L-methionine. It functions in the pathway amino-acid biosynthesis; L-methionine biosynthesis via de novo pathway; L-methionine from L-homocysteine (MetH route): step 1/1. Its function is as follows. Catalyzes the transfer of a methyl group from methylcob(III)alamin (MeCbl) to homocysteine, yielding enzyme-bound cob(I)alamin and methionine in the cytosol. MeCbl is an active form of cobalamin (vitamin B12) used as a cofactor for methionine biosynthesis. Cob(I)alamin form is regenerated to MeCbl by a transfer of a methyl group from 5-methyltetrahydrofolate. The processing of cobalamin in the cytosol occurs in a multiprotein complex composed of at least MMACHC, MMADHC, MTRR (methionine synthase reductase) and MTR which may contribute to shuttle safely and efficiently cobalamin towards MTR in order to produce methionine. This Rattus norvegicus (Rat) protein is Methionine synthase (Mtr).